The sequence spans 964 residues: Reticulon-3 (964 aa).

A compositionally biased stretch (low complexity) spans 1–24 (MAESSAATQSPSVSSSSSGAEPSA). Disordered regions lie at residues 1–32 (MAES…GGSP), 68–109 (AGLS…SETL), and 179–200 (WVVK…DRSA). Ala-2 is subject to N-acetylalanine. At 2 to 795 (AESSAATQSP…KKTGFVFGTT (794 aa)) the chain is on the cytoplasmic side. Ser-31 bears the Phosphoserine mark. A compositionally biased stretch (low complexity) spans 80-91 (SKSMTSSFLSSS). Phosphoserine occurs at positions 217, 225, 230, 233, 270, 303, and 429. Residues 479 to 536 (ITEKPDSLPSAAAKTSEREIKETPSRETVRSEMCENSEQPQAQPETPTQKSLEGEVAS) are disordered. The segment covering 493–511 (TSEREIKETPSRETVRSEM) has biased composition (basic and acidic residues). Over residues 516-527 (EQPQAQPETPTQ) the composition is skewed to low complexity. At Ser-529 the chain carries Phosphoserine. Thr-593 bears the Phosphothreonine mark. Phosphoserine occurs at positions 596, 597, and 673. Disordered stretches follow at residues 645–674 (ELSG…TMSP) and 697–723 (VQDE…SSSD). The segment covering 712 to 723 (FAPQSGPQSSSD) has biased composition (polar residues). Positions 776–964 (VHDLIFWRDV…LPGIAKKKAE (189 aa)) constitute a Reticulon domain. Residues 796–819 (LIMLLSLAAFSVISVVSYLILALL) constitute an intramembrane region (helical). At 820–876 (SVTISFRVYKSVIQAVQKSEEGHPFKAYLDVDITLSSEAFHNYMNAAMVHVNKALKL) the chain is on the cytoplasmic side. The segment at residues 877–899 (IIRLFLVEDLVDSLKLAVFMWLM) is an intramembrane region (helical). Residues 900–903 (TYVG) lie on the Cytoplasmic side of the membrane. An intramembrane region (helical) is located at residues 904-926 (AVFNGITLLILAELLVFSVPIVY). The tract at residues 919 to 964 (VFSVPIVYEKYKTQIDHYVGIARDQTKSIVEKIQAKLPGIAKKKAE) is interaction with FADD. At 927–964 (EKYKTQIDHYVGIARDQTKSIVEKIQAKLPGIAKKKAE) the chain is on the cytoplasmic side. The interval 932 to 934 (QID) is interaction with BACE1.

As to quaternary structure, homodimer. Interacts with RTN4. Isoform 3 interacts with BACE1, BACE2, BCL2 and FADD. Interacts with ATL1 and ATL2. Isoform 3 interacts with TMEM33. Interacts with ZFYVE27 and with KIF5A in a ZFYVE27-dependent manner. Interacts with RIGI. Interacts with TRIM25. In terms of tissue distribution, isoform 1, isoform 3, isoform 4 and isoform 5 are expressed in spinal cord. Isoform 1 is present in brain, where it is expressed in the neurons of cerebral cortex, hippocampus, hypothalamus and cerebellum (at protein level).

It is found in the endoplasmic reticulum membrane. The protein localises to the golgi apparatus membrane. Its function is as follows. May be involved in membrane trafficking in the early secretory pathway. Inhibits BACE1 activity and amyloid precursor protein processing. May induce caspase-8 cascade and apoptosis. May favor BCL2 translocation to the mitochondria upon endoplasmic reticulum stress. Induces the formation of endoplasmic reticulum tubules. Also acts as an inflammation-resolving regulator by interacting with both TRIM25 and RIGI, subsequently impairing RIGI 'Lys-63'-linked polyubiquitination leading to IRF3 and NF-kappa-B inhibition. The chain is Reticulon-3 (Rtn3) from Mus musculus (Mouse).